The following is a 312-amino-acid chain: Olfactory receptor 7D2 (312 aa).

Residues 1 to 25 (MEAGNQTGFLEFILLGLSEDPELQP) lie on the Extracellular side of the membrane. N-linked (GlcNAc...) asparagine glycosylation is present at N5. Residues 26–46 (FIFGLFLSMYLVTVLGNLLII) form a helical membrane-spanning segment. Topologically, residues 47 to 54 (LAISSDSH) are cytoplasmic. A helical membrane pass occupies residues 55–75 (LHTPMYFFLSNLSWVDICFST). At 76 to 99 (CIVPKMLVNIQTENKAISYMDCLT) the chain is on the extracellular side. C97 and C189 form a disulfide bridge. Residues 100–120 (QVYFSMFFPILDTLLLTVMAY) form a helical membrane-spanning segment. Residues 121-139 (DRFVAVCHPLHYMIIMNPH) lie on the Cytoplasmic side of the membrane. A helical membrane pass occupies residues 140–160 (LCGLLVFVTWLIGVMTSLLHI). The Extracellular segment spans residues 161-197 (SLMMHLIFCKDFEIPHFFCELTYILQLACSDTFLNST). The chain crosses the membrane as a helical span at residues 198 to 217 (LIYFMTGVLGVFPLLGIIFS). Residues 218–237 (YSRIASSIRKMSSSGGKQKA) are Cytoplasmic-facing. The helical transmembrane segment at 238-258 (LSTCGSHLSVVSLFYGTGIGV) threads the bilayer. At 259-271 (HFTSAVTHSSQKI) the chain is on the extracellular side. Residues 272-292 (SVASVMYTVVTPMLNPFIYSL) traverse the membrane as a helical segment. Residues 293–312 (RNKDVKGALGSLLSRAASCL) lie on the Cytoplasmic side of the membrane.

The protein belongs to the G-protein coupled receptor 1 family.

The protein resides in the cell membrane. Functionally, odorant receptor. This is Olfactory receptor 7D2 (OR7D2) from Homo sapiens (Human).